The chain runs to 396 residues: L-aspartate--glyoxylate aminotransferase (396 aa).

Lys-196 is modified (N6-(pyridoxal phosphate)lysine).

This sequence belongs to the class-V pyridoxal-phosphate-dependent aminotransferase family. Pyridoxal 5'-phosphate serves as cofactor.

The catalysed reaction is oxaloacetate + glycine = glyoxylate + L-aspartate. In terms of biological role, catalyzes the transamination of glyoxylate into glycine using L-aspartate as the preferred amino group donor. Is essential for the growth of P.denitrificans in the presence of glycolate and glyoxylate since it functions in glyoxylate assimilation via the beta-hydroxyaspartate cycle (BHAC). Can catalyze the reverse reaction in vitro, and also use L-serine and L-glutamate as amino group donor, but with much less efficiency than L-aspartate. The polypeptide is L-aspartate--glyoxylate aminotransferase (Paracoccus denitrificans (strain Pd 1222)).